A 318-amino-acid polypeptide reads, in one-letter code: Protein-L-histidine N-pros-methyltransferase (318 aa).

The signal sequence occupies residues 1–18 (MRLLAGWLCLSLASVWLA). Asn-35 is a glycosylation site (N-linked (GlcNAc...) asparagine). S-adenosyl-L-homocysteine contacts are provided by Glu-174, Asn-210, and Tyr-295.

It belongs to the METTL9 family.

The protein resides in the endoplasmic reticulum. It is found in the mitochondrion. The enzyme catalyses L-histidyl-[protein] + S-adenosyl-L-methionine = N(pros)-methyl-L-histidyl-[protein] + S-adenosyl-L-homocysteine + H(+). Protein-histidine N-methyltransferase that specifically catalyzes 1-methylhistidine (pros-methylhistidine) methylation of target proteins. Specifically methylates the second His of proteins with a His-x-His (HxH) motif (where 'x' is preferably a small amino acid), while exploiting the first one as a recognition signature. Catalyzes methylation of target proteins such as S100A9, NDUFB3, SLC39A5, SLC39A7, ARMC6 and DNAJB12; 1-methylhistidine modification may affect the binding of zinc and other metals to its target proteins. Constitutes the main methyltransferase for the 1-methylhistidine modification in cell. The sequence is that of Protein-L-histidine N-pros-methyltransferase from Homo sapiens (Human).